The chain runs to 123 residues: Large ribosomal subunit protein uL14 (123 aa).

It belongs to the universal ribosomal protein uL14 family. As to quaternary structure, part of the 50S ribosomal subunit. Forms a cluster with proteins L3 and L19. In the 70S ribosome, L14 and L19 interact and together make contacts with the 16S rRNA in bridges B5 and B8.

Functionally, binds to 23S rRNA. Forms part of two intersubunit bridges in the 70S ribosome. The chain is Large ribosomal subunit protein uL14 from Hamiltonella defensa subsp. Acyrthosiphon pisum (strain 5AT).